A 398-amino-acid polypeptide reads, in one-letter code: Cell division protein FtsZ (398 aa).

GTP-binding positions include 24-28, 111-113, glutamate 154, arginine 158, and aspartate 202; these read GAGGN and GTG. The interval 333 to 381 is disordered; sequence GRNNKSETSPISQSEDSEKEKFKWPYSQSESTQDKTLETKPAEQVSEGA. Basic and acidic residues predominate over residues 364-373; the sequence is TQDKTLETKP.

Belongs to the FtsZ family. As to quaternary structure, homodimer. Polymerizes to form a dynamic ring structure in a strictly GTP-dependent manner. Interacts directly with several other division proteins.

The protein localises to the cytoplasm. Its function is as follows. Essential cell division protein that forms a contractile ring structure (Z ring) at the future cell division site. The regulation of the ring assembly controls the timing and the location of cell division. One of the functions of the FtsZ ring is to recruit other cell division proteins to the septum to produce a new cell wall between the dividing cells. Binds GTP and shows GTPase activity. In Wolbachia sp, this protein is Cell division protein FtsZ.